The chain runs to 583 residues: PTS system lactose-specific EIICB component (583 aa).

Residues 8–409 (IEKGKPFFEK…VVDVMIYYPF (402 aa)) form the PTS EIIC type-3 domain. 9 helical membrane passes run 30 to 50 (GFIA…ITYV), 64 to 84 (GILM…VAGT), 103 to 123 (INFI…AADP), 137 to 157 (KGLL…NFFI), 176 to 196 (VFKD…LDLL), 222 to 242 (GWIG…VGIH), 283 to 303 (FVAT…FMWL), 339 to 359 (VFFI…KFFV), and 381 to 401 (IVMG…LIVV). The span at 453–462 (ANETTTTESA) shows a compositional bias: low complexity. Positions 453–475 (ANETTTTESAPSDEEVSAKNSSN) are disordered. The 104-residue stretch at 480–583 (QTNVLVLCAG…LDFVQQQFEK (104 aa)) folds into the PTS EIIB type-3 domain. Cysteine 487 serves as the catalytic Phosphocysteine intermediate; for EIIB activity. Cysteine 487 bears the Phosphocysteine; by EIIA mark.

Its subcellular location is the cell membrane. The enzyme catalyses lactose(out) + N(pros)-phospho-L-histidyl-[protein] = lactose 6-phosphate(in) + L-histidyl-[protein]. In terms of biological role, the phosphoenolpyruvate-dependent sugar phosphotransferase system (sugar PTS), a major carbohydrate active transport system, catalyzes the phosphorylation of incoming sugar substrates concomitantly with their translocation across the cell membrane. The enzyme II LacEF PTS system is involved in lactose transport. This is PTS system lactose-specific EIICB component from Staphylococcus haemolyticus (strain JCSC1435).